The primary structure comprises 156 residues: Low molecular weight phosphotyrosine protein phosphatase (156 aa).

The Nucleophile role is filled by Cys-11. Residue Arg-17 is part of the active site. Catalysis depends on Asp-128, which acts as the Proton donor.

It belongs to the low molecular weight phosphotyrosine protein phosphatase family.

It is found in the cytoplasm. It catalyses the reaction O-phospho-L-tyrosyl-[protein] + H2O = L-tyrosyl-[protein] + phosphate. The enzyme catalyses a phosphate monoester + H2O = an alcohol + phosphate. Functionally, may contribute to dephosphorylation of 'Tyr-15' of cdc2. This is Low molecular weight phosphotyrosine protein phosphatase (stp1) from Schizosaccharomyces pombe (strain 972 / ATCC 24843) (Fission yeast).